A 167-amino-acid chain; its full sequence is Lipoprotein signal peptidase (167 aa).

The next 4 membrane-spanning stretches (helical) occupy residues 8 to 28 (TFLT…VVLL), 46 to 66 (WGHF…FGLF), 70 to 90 (KIPL…FLGI), and 101 to 121 (IALT…LFHG). Catalysis depends on residues D125 and D143. A helical transmembrane segment spans residues 139-159 (FNLADAFISLGTLLLVGHLYF).

This sequence belongs to the peptidase A8 family.

Its subcellular location is the cell inner membrane. It catalyses the reaction Release of signal peptides from bacterial membrane prolipoproteins. Hydrolyzes -Xaa-Yaa-Zaa-|-(S,diacylglyceryl)Cys-, in which Xaa is hydrophobic (preferably Leu), and Yaa (Ala or Ser) and Zaa (Gly or Ala) have small, neutral side chains.. Its pathway is protein modification; lipoprotein biosynthesis (signal peptide cleavage). Functionally, this protein specifically catalyzes the removal of signal peptides from prolipoproteins. The sequence is that of Lipoprotein signal peptidase from Chlamydia muridarum (strain MoPn / Nigg).